A 746-amino-acid chain; its full sequence is MVLQARSKHRDAAPRPPRSARSSPPPLSGASEVDAGELGSERTPPSPGRRGAAGRKGPRAGTAAPAPDGLAGRLAAGLHWALGLRRGRGRTWSTLLLASFAALLHWSHITHLFENDRHFSHLSTLEREMAFRTEMGLYYSYFKTIVEAPSFLNGVWMIMNDKLTEYPLVINTLKRFNLYPEVILASWYRIYTKIMDLIGIQTKICWTVTRGEGLSPIESCEGLGDPACFYVAVIFMLNGLMMALFFIYGTYLSGSRLGGVVTVLCFFFNHGECTRVMWTPPLRESFSYPFLVLQMLLVTHILRAPELCRGSLIALCISNVLFMLPWQFAQFVLLTQIASLFAVYVVGYIDTHKLQKIIYMHMISLVLCFVLMFGNSMLLTSYYASSLVIIWGMLAMKPQFLRMNVSELSLWVIQGCGWLFGTVILKSVTSRIFGIADDAHIGNLLTSKFFSYKDFDTLLYTCAAEFDFMEKETPLRYTKTLLLPVVLVTVAAIVRKIFNDMRGVVAKQRTHTRKQQFEHGELVYHALQLLAYTALGVLIMRLKLFLTPHMCVMASLICSRQLFGWLFGKVHPGAVVFAILAAMSIQGSANLQTQWNIVGEFSNLPQEELIEWIRYSTKPDAVFAGAMPTMASVKLSALRPVVNHPHYEDAGLRARTKIVYSMYSRKAPEDVKKELMKLKVNYYILEESWCIRRSKPGCSMPEIWDVEDPDNAGKTPLCNILVKDSKPHFTTVFQNSVYKVLEVLRQ.

The interval 1-68 is disordered; it reads MVLQARSKHR…RAGTAAPAPD (68 aa). Residues Ser28 and Ser31 each carry the phosphoserine modification. Low complexity predominate over residues 59–68; sequence RAGTAAPAPD. 11 consecutive transmembrane segments (helical) span residues 137–159, 227–247, 257–279, 307–325, 331–350, 357–374, 380–396, 405–425, 481–501, 520–540, and 562–582; these read LYYS…WMIM, ACFY…LFFI, LGGV…VMWT, LCRG…FMLP, FVLL…GYID, IIYM…LMFG, TSYY…MLAM, VSEL…TVIL, LLLP…FNDM, GELV…VLIM, and LFGW…ILAA.

This sequence belongs to the dpy-19 family.

The protein localises to the endoplasmic reticulum membrane. The enzyme catalyses L-tryptophyl-[protein] + a di-trans,poly-cis-dolichyl beta-D-mannosyl phosphate = C-alpha-D-mannosyl-L-tryptophyl-[protein] + a di-trans,poly-cis-dolichyl phosphate + H(+). It functions in the pathway protein modification; protein glycosylation. Its function is as follows. C-mannosyltransferase that mediates the C-mannosylation tryptophan residues on target proteins. The reaction occurs on the luminal side of the endoplasmic reticulum and involves the transfer of a mannose unit from a dolichylphosphate mannose (Dol-P-Man) donor to an acceptor protein containing a WxxW consensus sequence. C-mannosylates the first two tryptophans in the WxxWxxWxxC sequence motif in thrombospondin (TSP) type-1 repeats of UNC5A. Regulates neurite extension during development. This chain is Protein C-mannosyl-transferase DPY19L1 (Dpy19l1), found in Mus musculus (Mouse).